A 110-amino-acid polypeptide reads, in one-letter code: uncharacterized protein (110 aa).

Residues 1–26 (MIRNVLLAFMICSGMTLLGGCSSVMS) form the signal peptide. The disordered stretch occupies residues 87-110 (RVEKSEANAQATNAVIPPARMPDN).

This sequence to E.coli YceK.

This is an uncharacterized protein from Escherichia coli (strain K12).